A 444-amino-acid polypeptide reads, in one-letter code: Pre-mRNA-splicing factor cwc25 (444 aa).

Disordered regions lie at residues 1-27 (MGSG…QKAE), 168-385 (LASM…TDLD), and 397-425 (EAER…GFMS). Residues 19-65 (NVAATQKAEAEAIAERKKLQQRLQEIEEERRKEEIQKALEAAGGKRK) are a coiled coil. Over residues 186-199 (QRRHKHRSHHHRSD) the composition is skewed to basic residues. Composition is skewed to basic and acidic residues over residues 200–220 (RHRD…DRDR) and 228–281 (DSRD…DDRS). The segment covering 282 to 293 (RRHRFPQGRSRS) has biased composition (basic residues). Composition is skewed to basic and acidic residues over residues 305–344 (RREY…EQPK), 360–372 (DGDH…ERAK), and 397–410 (EAER…EKAR). Positions 364-417 (KNAEEERAKKLAAMQAAATDLDKAREERLKALAEAERAEREADEKARQQNKKFR) form a coiled coil.

It belongs to the CWC25 family. In terms of assembly, associated with the spliceosome.

It localises to the nucleus. Involved in pre-mRNA splicing. The polypeptide is Pre-mRNA-splicing factor cwc25 (msp-6) (Neurospora crassa (strain ATCC 24698 / 74-OR23-1A / CBS 708.71 / DSM 1257 / FGSC 987)).